Consider the following 152-residue polypeptide: 6,7-dimethyl-8-ribityllumazine synthase (152 aa).

5-amino-6-(D-ribitylamino)uracil is bound by residues phenylalanine 22, 54–56, and 78–80; these read AFE and AVI. Position 83-84 (83-84) interacts with (2S)-2-hydroxy-3-oxobutyl phosphate; sequence ET. Histidine 86 (proton donor) is an active-site residue. Residue phenylalanine 111 coordinates 5-amino-6-(D-ribitylamino)uracil. Arginine 125 contacts (2S)-2-hydroxy-3-oxobutyl phosphate.

This sequence belongs to the DMRL synthase family.

The catalysed reaction is (2S)-2-hydroxy-3-oxobutyl phosphate + 5-amino-6-(D-ribitylamino)uracil = 6,7-dimethyl-8-(1-D-ribityl)lumazine + phosphate + 2 H2O + H(+). It participates in cofactor biosynthesis; riboflavin biosynthesis; riboflavin from 2-hydroxy-3-oxobutyl phosphate and 5-amino-6-(D-ribitylamino)uracil: step 1/2. Catalyzes the formation of 6,7-dimethyl-8-ribityllumazine by condensation of 5-amino-6-(D-ribitylamino)uracil with 3,4-dihydroxy-2-butanone 4-phosphate. This is the penultimate step in the biosynthesis of riboflavin. This chain is 6,7-dimethyl-8-ribityllumazine synthase, found in Limosilactobacillus reuteri (strain DSM 20016) (Lactobacillus reuteri).